The chain runs to 334 residues: Ribosomal RNA large subunit methyltransferase F (334 aa).

Positions 1 to 25 are disordered; the sequence is MPRPSSPRPDAERKSASPLHPRNRH.

It belongs to the methyltransferase superfamily. METTL16/RlmF family.

The protein resides in the cytoplasm. The catalysed reaction is adenosine(1618) in 23S rRNA + S-adenosyl-L-methionine = N(6)-methyladenosine(1618) in 23S rRNA + S-adenosyl-L-homocysteine + H(+). Its function is as follows. Specifically methylates the adenine in position 1618 of 23S rRNA. The protein is Ribosomal RNA large subunit methyltransferase F of Pseudomonas paraeruginosa (strain DSM 24068 / PA7) (Pseudomonas aeruginosa (strain PA7)).